A 118-amino-acid polypeptide reads, in one-letter code: T cell receptor gamma variable 5 (118 aa).

Residues 1–17 (MRWALLVLLAFLSPASQ) form the signal peptide. The 101-residue stretch at 18–118 (KSSNLEGGTK…GVYYCATWDR (101 aa)) folds into the Ig-like domain. Cysteine 41 and cysteine 113 are joined by a disulfide. Asparagine 106 carries N-linked (GlcNAc...) asparagine glycosylation.

As to quaternary structure, gamma-delta TR is a heterodimer composed of a gamma and delta chain; disulfide-linked. The gamma-delta TR is associated with the transmembrane signaling CD3 coreceptor proteins following the stoichiometry: a single gamma-delta TR heterodimer associates with one CD3D-CD3E heterodimer, one CD3G-CD3E heterodimer and one CD247 homodimer forming a stable octameric structure. Upon activation, gamma-delta TR complex associates with FCER1G to initiate intracellular signaling.

It is found in the cell membrane. Its function is as follows. V region of the variable domain of T cell receptor (TR) gamma chain that participates in the antigen recognition. Gamma-delta TRs recognize a variety of self and foreign non-peptide antigens frequently expressed at the epithelial boundaries between the host and external environment, including endogenous lipids presented by MH-like protein CD1D and phosphoantigens presented by butyrophilin-like molecule BTN3A1. Upon antigen recognition induces rapid, innate-like immune responses involved in pathogen clearance and tissue repair. Binding of gamma-delta TR complex to antigen triggers phosphorylation of immunoreceptor tyrosine-based activation motifs (ITAMs) in the CD3 chains by the LCK and FYN kinases, allowing the recruitment, phosphorylation, and activation of ZAP70 that facilitates phosphorylation of the scaffolding proteins LCP2 and LAT. This lead to the formation of a supramolecular signalosome that recruits the phospholipase PLCG1, resulting in calcium mobilization and ERK activation, ultimately leading to T cell expansion and differentiation into effector cells. Gamma-delta TRs are produced through somatic rearrangement of a limited repertoire of variable (V), diversity (D), and joining (J) genes. The potential diversity of gamma-delta TRs is conferred by the unique ability to rearrange (D) genes in tandem and to utilize all three reading frames. The combinatorial diversity is considerably increased by the sequence exonuclease trimming and random nucleotide (N) region additions which occur during the V-(D)-J rearrangements. This Homo sapiens (Human) protein is T cell receptor gamma variable 5.